We begin with the raw amino-acid sequence, 1896 residues long: Plexin-A1 (1896 aa).

An N-terminal signal peptide occupies residues 1-26 (MPLPPRSLQVLLLLLLLLLLLPGMWA). One can recognise a Sema domain in the interval 27–512 (EAGLPRAGGG…TEKQVTRVPV (486 aa)). At 27 to 1244 (EAGLPRAGGG…VYSDSLLTLP (1218 aa)) the chain is on the extracellular side. The N-linked (GlcNAc...) asparagine glycan is linked to Asn-77. Disulfide bonds link Cys-95-Cys-104, Cys-130-Cys-138, Cys-286-Cys-407, Cys-302-Cys-358, Cys-376-Cys-395, Cys-515-Cys-532, Cys-521-Cys-563, Cys-524-Cys-541, Cys-535-Cys-547, and Cys-598-Cys-617. N-linked (GlcNAc...) asparagine glycans are attached at residues Asn-660, Asn-672, and Asn-701. 4 consecutive IPT/TIG domains span residues 864-959 (PKIL…FTFV), 961-1045 (PTFY…YNYT), 1048-1147 (PTIL…FLYY), and 1150-1236 (PVLE…LQVY). An N-linked (GlcNAc...) asparagine glycan is attached at Asn-1043. 2 N-linked (GlcNAc...) asparagine glycosylation sites follow: Asn-1187 and Asn-1212. Residues 1245–1265 (AIVGIGGGGGLLLLVIVAVLI) traverse the membrane as a helical segment. The stretch at 1264–1317 (LIAYKRKSRDADRTLKRLQLQMDNLESRVALECKEAFAELQTDIHELTNDLDGA) forms a coiled coil. Residues 1266-1896 (AYKRKSRDAD…QVVDTMALSS (631 aa)) lie on the Cytoplasmic side of the membrane.

This sequence belongs to the plexin family. As to quaternary structure, interacts directly with NRP1 and NRP2. Interacts with PLXN1B. Interacts with FARP2, RND1 and KDR/VEGFR2. Binding of SEMA3A leads to dissociation of FARP2. Interacts with CRMP1, DPYSL2/CRMP2, DPYSL3/CRMP3 and DPYSL4/CRMP4. Interacts (via TIG domains) with TREM2; the interaction mediates SEMA6D binding and signaling through TYROBP. In terms of tissue distribution, detected in fetal brain, lung, liver and kidney.

The protein localises to the cell membrane. Its function is as follows. Coreceptor for SEMA3A, SEMA3C, SEMA3F and SEMA6D. Necessary for signaling by class 3 semaphorins and subsequent remodeling of the cytoskeleton. Plays a role in axon guidance, invasive growth and cell migration. Class 3 semaphorins bind to a complex composed of a neuropilin and a plexin. The plexin modulates the affinity of the complex for specific semaphorins, and its cytoplasmic domain is required for the activation of down-stream signaling events in the cytoplasm. Acts as coreceptor of TREM2 for SEMA6D in dendritic cells and is involved in the generation of immune responses and skeletal homeostasis. This Homo sapiens (Human) protein is Plexin-A1.